The primary structure comprises 220 residues: 5'(3')-deoxyribonucleotidase, mitochondrial (220 aa).

The N-terminal 23 residues, 1–23 (MHRLRGCCARPRGAPLRAERSRA), are a transit peptide targeting the mitochondrion. Aspartate 33 acts as the Nucleophile in catalysis. Mg(2+) contacts are provided by aspartate 33 and aspartate 35. Aspartate 35 serves as the catalytic Proton donor. Substrate-binding residues include aspartate 35, phenylalanine 41, phenylalanine 67, tryptophan 68, valine 69, tryptophan 88, threonine 122, and lysine 157. Residue aspartate 168 coordinates Mg(2+).

It belongs to the 5'(3')-deoxyribonucleotidase family. In terms of assembly, homodimer. Mg(2+) serves as cofactor.

It localises to the mitochondrion. Its function is as follows. Dephosphorylates specifically the 5' and 2'(3')-phosphates of uracil and thymine deoxyribonucleotides, and so protects mitochondrial DNA replication from excess dTTP. Has only marginal activity towards dIMP and dGMP. The sequence is that of 5'(3')-deoxyribonucleotidase, mitochondrial (Nt5m) from Mus musculus (Mouse).